The sequence spans 119 residues: Holo-[acyl-carrier-protein] synthase (119 aa).

Mg(2+)-binding residues include Asp8 and Glu58.

Belongs to the P-Pant transferase superfamily. AcpS family. Mg(2+) is required as a cofactor.

It localises to the cytoplasm. The catalysed reaction is apo-[ACP] + CoA = holo-[ACP] + adenosine 3',5'-bisphosphate + H(+). Its function is as follows. Transfers the 4'-phosphopantetheine moiety from coenzyme A to a Ser of acyl-carrier-protein. This is Holo-[acyl-carrier-protein] synthase from Bacillus thuringiensis subsp. konkukian (strain 97-27).